Reading from the N-terminus, the 128-residue chain is L-ectoine synthase (128 aa).

This sequence belongs to the ectoine synthase family.

The enzyme catalyses (2S)-4-acetamido-2-aminobutanoate = L-ectoine + H2O. Its pathway is amine and polyamine biosynthesis; ectoine biosynthesis; L-ectoine from L-aspartate 4-semialdehyde: step 3/3. Functionally, catalyzes the circularization of gamma-N-acetyl-alpha,gamma-diaminobutyric acid (ADABA) to ectoine (1,4,5,6-tetrahydro-2-methyl-4-pyrimidine carboxylic acid), which is an excellent osmoprotectant. The protein is L-ectoine synthase of Vibrio parahaemolyticus serotype O3:K6 (strain RIMD 2210633).